The chain runs to 807 residues: ATP-binding cassette sub-family F member 1 (807 aa).

Residues 1–227 (MPKGPKQQPP…KEKAKKAEQM (227 aa)) form a disordered region. At serine 22 the chain carries Phosphoserine. Residues 29 to 39 (KKGKKDKKTKK) show a composition bias toward basic residues. Residues 47-65 (VEDRQAGEEEKVLKEKEQQ) show a composition bias toward basic and acidic residues. Residues 73–85 (QKKKRDTRKGRRK) show a composition bias toward basic residues. At serine 106 the chain carries Phosphoserine. Phosphoserine; by CK2 is present on residues serine 110 and serine 141. Positions 148 to 161 (EKHPPKPAKPEKNR) are enriched in basic and acidic residues. At serine 167 the chain carries Phosphoserine. Residues 197 to 207 (LDDEEEQDEEE) show a composition bias toward acidic residues. Positions 208–227 (IKEKEPPKQGKEKAKKAEQM) are enriched in basic and acidic residues. The ABC transporter 1 domain maps to 266–510 (IKLEKFSISA…MYQQKQKELL (245 aa)). 298–305 (GPNGKGKT) is a binding site for ATP. A compositionally biased stretch (basic and acidic residues) spans 521–542 (KELKAGGKSTKQAEKQTKEALT). Positions 521–564 (KELKAGGKSTKQAEKQTKEALTRKQQKCRRKNQDEESQEAPELL) are disordered. A Phosphoserine modification is found at serine 557. An ABC transporter 2 domain is found at 587-802 (LGLHGVTFGY…VLEALGEVMV (216 aa)). Residue 620-627 (GPNGVGKS) participates in ATP binding.

It belongs to the ABC transporter superfamily. ABCF family. EF3 subfamily. In terms of assembly, interacts (via N-terminus) with EIF2S1; the interaction is independent of its phosphorylated status. Associates (via both ABC transporter domains) with the ribosomes. In terms of processing, phosphorylated at phosphoserine and phosphothreonine. Phosphorylation on Ser-110 and Ser-141 by CK2; inhibits association of EIF2 with ribosomes.

Its subcellular location is the cytoplasm. It is found in the nucleus. The protein resides in the nucleoplasm. The protein localises to the nucleus envelope. Functionally, required for efficient Cap- and IRES-mediated mRNA translation initiation. Not involved in the ribosome biogenesis. The chain is ATP-binding cassette sub-family F member 1 (ABCF1) from Sus scrofa (Pig).